The primary structure comprises 337 residues: tRNA N6-adenosine threonylcarbamoyltransferase (337 aa).

The Fe cation site is built by histidine 111 and histidine 115. Substrate-binding positions include leucine 134 to glycine 138, aspartate 167, glycine 180, and asparagine 272. Aspartate 300 lines the Fe cation pocket.

Belongs to the KAE1 / TsaD family. It depends on Fe(2+) as a cofactor.

It localises to the cytoplasm. The catalysed reaction is L-threonylcarbamoyladenylate + adenosine(37) in tRNA = N(6)-L-threonylcarbamoyladenosine(37) in tRNA + AMP + H(+). In terms of biological role, required for the formation of a threonylcarbamoyl group on adenosine at position 37 (t(6)A37) in tRNAs that read codons beginning with adenine. Is involved in the transfer of the threonylcarbamoyl moiety of threonylcarbamoyl-AMP (TC-AMP) to the N6 group of A37, together with TsaE and TsaB. TsaD likely plays a direct catalytic role in this reaction. This chain is tRNA N6-adenosine threonylcarbamoyltransferase, found in Erwinia tasmaniensis (strain DSM 17950 / CFBP 7177 / CIP 109463 / NCPPB 4357 / Et1/99).